The chain runs to 171 residues: PRA1-like protein (171 aa).

3 helical membrane-spanning segments follow: residues 67-87 (AIIAMLVIYALIRNPLLLIVI), 119-139 (VILACVLIPLGLFASPIETII), and 140-160 (WLVGASCVCVFGHAAFFEPPV).

The protein belongs to the PRA1 family.

The protein localises to the membrane. The sequence is that of PRA1-like protein from Schizosaccharomyces pombe (strain 972 / ATCC 24843) (Fission yeast).